We begin with the raw amino-acid sequence, 383 residues long: Arginine biosynthesis bifunctional protein ArgJ (383 aa).

6 residues coordinate substrate: T146, K168, T179, E259, N378, and S383. Catalysis depends on T179, which acts as the Nucleophile.

The protein belongs to the ArgJ family. In terms of assembly, heterotetramer of two alpha and two beta chains.

It localises to the cytoplasm. It carries out the reaction N(2)-acetyl-L-ornithine + L-glutamate = N-acetyl-L-glutamate + L-ornithine. The catalysed reaction is L-glutamate + acetyl-CoA = N-acetyl-L-glutamate + CoA + H(+). It functions in the pathway amino-acid biosynthesis; L-arginine biosynthesis; L-ornithine and N-acetyl-L-glutamate from L-glutamate and N(2)-acetyl-L-ornithine (cyclic): step 1/1. The protein operates within amino-acid biosynthesis; L-arginine biosynthesis; N(2)-acetyl-L-ornithine from L-glutamate: step 1/4. In terms of biological role, catalyzes two activities which are involved in the cyclic version of arginine biosynthesis: the synthesis of N-acetylglutamate from glutamate and acetyl-CoA as the acetyl donor, and of ornithine by transacetylation between N(2)-acetylornithine and glutamate. The chain is Arginine biosynthesis bifunctional protein ArgJ from Streptomyces coelicolor (strain ATCC BAA-471 / A3(2) / M145).